A 216-amino-acid polypeptide reads, in one-letter code: ADP-ribosylation factor D (216 aa).

Residues Ser-188 to Gln-204 show a composition bias toward low complexity. Residues Ser-188–Thr-216 form a disordered region. Residues Pro-205 to Thr-216 show a composition bias toward polar residues.

The protein belongs to the small GTPase superfamily. Arf family.

It is found in the golgi apparatus. Its function is as follows. GTP-binding protein involved in protein trafficking; may modulate vesicle budding and uncoating within the Golgi apparatus. This is ADP-ribosylation factor D (arrD) from Dictyostelium discoideum (Social amoeba).